Reading from the N-terminus, the 394-residue chain is Probable nucleoredoxin 2 (394 aa).

2 Thioredoxin domains span residues Gly-15 to Glu-176 and Ser-180 to Asp-327.

It belongs to the nucleoredoxin family.

It carries out the reaction [protein]-dithiol + NAD(+) = [protein]-disulfide + NADH + H(+). The catalysed reaction is [protein]-dithiol + NADP(+) = [protein]-disulfide + NADPH + H(+). Functionally, probable thiol-disulfide oxidoreductase that may participate in various redox reactions. The chain is Probable nucleoredoxin 2 from Oryza sativa subsp. japonica (Rice).